Consider the following 457-residue polypeptide: Argininosuccinate lyase (457 aa).

The protein belongs to the lyase 1 family. Argininosuccinate lyase subfamily.

It localises to the cytoplasm. The enzyme catalyses 2-(N(omega)-L-arginino)succinate = fumarate + L-arginine. Its pathway is amino-acid biosynthesis; L-arginine biosynthesis; L-arginine from L-ornithine and carbamoyl phosphate: step 3/3. The chain is Argininosuccinate lyase from Salmonella arizonae (strain ATCC BAA-731 / CDC346-86 / RSK2980).